The chain runs to 248 residues: Granulin (248 aa).

The protein belongs to the polyhedrin family.

In terms of biological role, component of the virus occlusion bodies, which are large proteinaceous structures, that protect the virus from the outside environment for extended periods until they are ingested by insect larvae. The sequence is that of Granulin from Trichoplusia ni (Cabbage looper).